A 427-amino-acid polypeptide reads, in one-letter code: UPF0229 protein YeaH (427 aa).

A compositionally biased stretch (basic and acidic residues) spans 79-90; sequence NDHFVQNDRIER. Positions 79–110 are disordered; it reads NDHFVQNDRIERPQGGGGGSGSGQGQASQDGE. Residues 92-102 are compositionally biased toward gly residues; that stretch reads QGGGGGSGSGQ.

The protein belongs to the UPF0229 family.

This Escherichia coli (strain K12 / MC4100 / BW2952) protein is UPF0229 protein YeaH.